A 382-amino-acid polypeptide reads, in one-letter code: tRNA(Met) cytidine acetate ligase (382 aa).

Residues 9 to 22, Gly-103, Asn-152, and Arg-177 each bind ATP; that span reads VTEYNPFHNGHAYQ.

This sequence belongs to the TmcAL family.

Its subcellular location is the cytoplasm. The catalysed reaction is cytidine(34) in elongator tRNA(Met) + acetate + ATP = N(4)-acetylcytidine(34) in elongator tRNA(Met) + AMP + diphosphate. Catalyzes the formation of N(4)-acetylcytidine (ac(4)C) at the wobble position of elongator tRNA(Met), using acetate and ATP as substrates. First activates an acetate ion to form acetyladenylate (Ac-AMP) and then transfers the acetyl group to tRNA to form ac(4)C34. This chain is tRNA(Met) cytidine acetate ligase, found in Levilactobacillus brevis (strain ATCC 367 / BCRC 12310 / CIP 105137 / JCM 1170 / LMG 11437 / NCIMB 947 / NCTC 947) (Lactobacillus brevis).